A 467-amino-acid polypeptide reads, in one-letter code: Repressible acid phosphatase (467 aa).

A signal peptide spans 1 to 17 (MFKSVVYSILAASLANA). Catalysis depends on histidine 75, which acts as the Nucleophile. 6 N-linked (GlcNAc...) asparagine glycosylation sites follow: asparagine 97, asparagine 103, asparagine 162, asparagine 192, asparagine 250, and asparagine 315. Aspartate 338 serves as the catalytic Proton donor. Residues asparagine 356, asparagine 390, asparagine 439, asparagine 445, asparagine 456, and asparagine 461 are each glycosylated (N-linked (GlcNAc...) asparagine).

Belongs to the histidine acid phosphatase family. Post-translationally, glycosylated during secretion across the membrane.

The protein resides in the secreted. The catalysed reaction is a phosphate monoester + H2O = an alcohol + phosphate. Its function is as follows. Partially mediates extracellular nucleotide derived phosphate hydrolysis along with NPP1 and NPP2. The chain is Repressible acid phosphatase (PHO5) from Saccharomyces cerevisiae (strain ATCC 204508 / S288c) (Baker's yeast).